Reading from the N-terminus, the 453-residue chain is uncharacterized protein (453 aa).

The [4Fe-4S] cluster site is built by cysteine 74, cysteine 80, cysteine 83, and cysteine 162. Glutamine 286, tyrosine 315, glutamate 336, and aspartate 384 together coordinate S-adenosyl-L-methionine. Residue cysteine 411 is the Nucleophile of the active site.

It belongs to the class I-like SAM-binding methyltransferase superfamily. RNA M5U methyltransferase family.

This is an uncharacterized protein from Staphylococcus aureus (strain MW2).